The sequence spans 379 residues: Pectin lyase B (379 aa).

A signal peptide spans 1-19; sequence MRLHAPILSLLAAAASTSA. Disulfide bonds link cysteine 82–cysteine 101 and cysteine 91–cysteine 225. Asparagine 128 is a glycosylation site (N-linked (GlcNAc...) asparagine). Arginine 255 is a catalytic residue. The cysteines at positions 322 and 330 are disulfide-linked.

This sequence belongs to the polysaccharide lyase 1 family.

The protein localises to the secreted. It carries out the reaction Eliminative cleavage of (1-&gt;4)-alpha-D-galacturonan methyl ester to give oligosaccharides with 4-deoxy-6-O-methyl-alpha-D-galact-4-enuronosyl groups at their non-reducing ends.. In terms of biological role, pectinolytic enzymes consist of four classes of enzymes: pectin lyase, polygalacturonase, pectin methylesterase and rhamnogalacturonase. Among pectinolytic enzymes, pectin lyase is the most important in depolymerization of pectin, since it cleaves internal glycosidic bonds of highly methylated pectins. The chain is Pectin lyase B (pelB) from Emericella nidulans (strain FGSC A4 / ATCC 38163 / CBS 112.46 / NRRL 194 / M139) (Aspergillus nidulans).